A 253-amino-acid chain; its full sequence is 5'-nucleotidase SurE (253 aa).

4 residues coordinate a divalent metal cation: aspartate 8, aspartate 9, serine 39, and asparagine 92.

The protein belongs to the SurE nucleotidase family. Requires a divalent metal cation as cofactor.

The protein resides in the cytoplasm. It catalyses the reaction a ribonucleoside 5'-phosphate + H2O = a ribonucleoside + phosphate. Nucleotidase that shows phosphatase activity on nucleoside 5'-monophosphates. This Burkholderia vietnamiensis (strain G4 / LMG 22486) (Burkholderia cepacia (strain R1808)) protein is 5'-nucleotidase SurE.